Here is a 272-residue protein sequence, read N- to C-terminus: Tryptophan synthase alpha chain (272 aa).

Residues Glu-49 and Asp-60 each act as proton acceptor in the active site.

This sequence belongs to the TrpA family. In terms of assembly, tetramer of two alpha and two beta chains.

The catalysed reaction is (1S,2R)-1-C-(indol-3-yl)glycerol 3-phosphate + L-serine = D-glyceraldehyde 3-phosphate + L-tryptophan + H2O. The protein operates within amino-acid biosynthesis; L-tryptophan biosynthesis; L-tryptophan from chorismate: step 5/5. The alpha subunit is responsible for the aldol cleavage of indoleglycerol phosphate to indole and glyceraldehyde 3-phosphate. The sequence is that of Tryptophan synthase alpha chain from Acidithiobacillus ferrooxidans (strain ATCC 23270 / DSM 14882 / CIP 104768 / NCIMB 8455) (Ferrobacillus ferrooxidans (strain ATCC 23270)).